Consider the following 655-residue polypeptide: A-type voltage-gated potassium channel KCND3 (655 aa).

Residues 1-182 (MAAGVAAWLP…FENPHTSTLA (182 aa)) are Cytoplasmic-facing. The interval 6-21 (AAWLPFARAAAIGWMP) is interaction with KCNIP1 and KCNIP2. An interaction with KCNIP1 region spans residues 70 to 78 (EKEFFFNED). Positions 104, 110, 131, and 132 each coordinate Zn(2+). Residue Ser-153 is modified to Phosphoserine. A helical transmembrane segment spans residues 183 to 204 (LVFYYVTGFFIAVSVITNVVET). The Extracellular portion of the chain corresponds to 205–223 (VPCGTVPGSKELPCGERYS). The helical transmembrane segment at 224–246 (VAFFCLDTACVMIFTVEYLLRLF) threads the bilayer. Topologically, residues 247–253 (AAPSRYR) are cytoplasmic. A helical membrane pass occupies residues 254–277 (FIRSVMSIIDVVAIMPYYIGLVMT). The Extracellular segment spans residues 278-283 (NNEDVS). Residues 284–306 (GAFVTLRVFRVFRIFKFSRHSQG) traverse the membrane as a helical; Voltage-sensor segment. The Cytoplasmic portion of the chain corresponds to 307-318 (LRILGYTLKSCA). The helical transmembrane segment at 319–343 (SELGFLLFSLTMAIIIFATVMFYAE) threads the bilayer. The Extracellular segment spans residues 344–352 (KGSSASKFT). The helical intramembrane region spans 353–366 (SIPASFWYTIVTMT). K(+) contacts are provided by Thr-367, Leu-368, Gly-369, and Tyr-370. The short motif at 367-372 (TLGYGD) is the Selectivity filter element. The stretch at 367 to 374 (TLGYGDMV) is an intramembrane region. The chain crosses the membrane as a helical span at residues 378 to 400 (IAGKIFGSICSLSGVLVIALPVP). At 401–655 (VIVSNFSRIY…ASNVVKVSVL (255 aa)) the chain is on the cytoplasmic side. Position 459 is a phosphothreonine (Thr-459). The segment at 470–487 (SLIESQHHHLLHCLEKTT) is interaction with KCNIP1 and KCNIP2. The tract at residues 472-487 (IESQHHHLLHCLEKTT) is mediates dendritic targeting. Phosphoserine; by CaMK2D is present on Ser-569. Position 585 is a phosphoserine (Ser-585). The disordered stretch occupies residues 618 to 644 (PAPPALTPEGETRPPPASPGPNTNIPS).

Belongs to the potassium channel family. D (Shal) (TC 1.A.1.2) subfamily. Kv4.3/KCND3 sub-subfamily. Homotetramer. Heterotetramer with KCND2. Associates with the regulatory subunits KCNIP3 and KCNIP4. Interacts with KCNE1, KCNE2, SCN1B and KCNAB1 and DLG1. Component of heteromultimeric potassium channels. Identified in potassium channel complexes containing KCND1, KCND2, KCND3, KCNIP1, KCNIP2, KCNIP3, KCNIP4, DPP6 and DPP10. Interacts with KCNIP1; each KCNIP1 monomer interacts with two adjacent KCND3 subunits, through both the N-terminal inactivation ball of a KCND3 subunit and a C-terminal helix from the adjacent KCND3 subunit, clamping them together; this interaction stabilizes the tetrameric form and modulates the channel gating kinetics namely channel activation and inactivation kinetics and rate of recovery from inactivation. Interacts with DPP6; this interaction modulates the channel gating kinetics namely channel activation and inactivation kinetics and rate of recovery from inactivation. Interacts with KCNIP2; each KCNIP2 monomer interacts with two adjacent KCND3 subunits, through both the N-terminal inactivation ball of a KCND3 subunit and a C-terminal helix from the adjacent KCND3 subunit, clamping them together; this interaction modulates the channel gating kinetics. Post-translationally, regulated through phosphorylation at Ser-569 by CaMK2D. As to expression, detected in carotid body chemoreceptor cells and in frontal cortex.

It is found in the cell membrane. It localises to the sarcolemma. Its subcellular location is the cell projection. The protein resides in the dendrite. The catalysed reaction is K(+)(in) = K(+)(out). Pore-forming (alpha) subunit of voltage-gated A-type potassium channels that mediates transmembrane potassium transport in excitable membranes, in brain and heart. In cardiomyocytes, may generate the transient outward potassium current I(To). In neurons, may conduct the transient subthreshold somatodendritic A-type potassium current (ISA). Kinetics properties are characterized by fast activation at subthreshold membrane potentials, rapid inactivation, and quick recovery from inactivation. Channel properties are modulated by interactions with regulatory subunits. Interaction with the regulatory subunits KCNIP1 or KCNIP2 modulates the channel gating kinetics namely channel activation and inactivation kinetics and rate of recovery from inactivation. Likewise, interaction with DPP6 modulates the channel gating kinetics namely channel activation and inactivation kinetics. This is A-type voltage-gated potassium channel KCND3 from Oryctolagus cuniculus (Rabbit).